We begin with the raw amino-acid sequence, 345 residues long: Glycerol-3-phosphate dehydrogenase [NAD(P)+] (345 aa).

NADPH is bound by residues Ser11, Trp12, His32, Arg33, and Lys106. The sn-glycerol 3-phosphate site is built by Lys106, Gly137, and Ser139. NADPH is bound at residue Ala141. Sn-glycerol 3-phosphate-binding residues include Lys192, Asp245, Ser255, Arg256, and Asn257. The active-site Proton acceptor is the Lys192. An NADPH-binding site is contributed by Arg256. Residues Val280 and Glu282 each contribute to the NADPH site.

Belongs to the NAD-dependent glycerol-3-phosphate dehydrogenase family.

The protein localises to the cytoplasm. It carries out the reaction sn-glycerol 3-phosphate + NAD(+) = dihydroxyacetone phosphate + NADH + H(+). The catalysed reaction is sn-glycerol 3-phosphate + NADP(+) = dihydroxyacetone phosphate + NADPH + H(+). Its pathway is membrane lipid metabolism; glycerophospholipid metabolism. In terms of biological role, catalyzes the reduction of the glycolytic intermediate dihydroxyacetone phosphate (DHAP) to sn-glycerol 3-phosphate (G3P), the key precursor for phospholipid synthesis. The chain is Glycerol-3-phosphate dehydrogenase [NAD(P)+] from Bacillus velezensis (strain DSM 23117 / BGSC 10A6 / LMG 26770 / FZB42) (Bacillus amyloliquefaciens subsp. plantarum).